The chain runs to 266 residues: Large ribosomal subunit protein uL2c (266 aa).

Positions 1–24 (MAIHLYKTSTPSTRNGTVDSQVKS) are disordered. The segment covering 7–24 (KTSTPSTRNGTVDSQVKS) has biased composition (polar residues).

Belongs to the universal ribosomal protein uL2 family. In terms of assembly, part of the 50S ribosomal subunit.

It is found in the plastid. It localises to the chloroplast. In Nicotiana debneyi (Debney's tobacco), this protein is Large ribosomal subunit protein uL2c (rpl2).